Reading from the N-terminus, the 469-residue chain is Dihydrolipoyl dehydrogenase (469 aa).

Residues 34-42, Lys51, and Gly114 contribute to the FAD site; that span reads EKQYWGGVC. Cys42 and Cys47 are disulfide-bonded. NAD(+) contacts are provided by residues 179-183, Glu202, and 269-272; these read GAGAI and SVGF. Positions 312 and 320 each coordinate FAD. Residue His448 is the Proton acceptor of the active site.

Belongs to the class-I pyridine nucleotide-disulfide oxidoreductase family. As to quaternary structure, homodimer. Part of an unusual ODH/PDH supercomplex, consisting of AceE (E1), AceF (E2), and Lpd (E3) together with OdhA (E1+E2). The cofactor is FAD.

It is found in the cytoplasm. It catalyses the reaction N(6)-[(R)-dihydrolipoyl]-L-lysyl-[protein] + NAD(+) = N(6)-[(R)-lipoyl]-L-lysyl-[protein] + NADH + H(+). It functions in the pathway carbohydrate metabolism; tricarboxylic acid cycle; succinyl-CoA from 2-oxoglutarate (dehydrogenase route): step 1/1. Its function is as follows. Lipoamide dehydrogenase is an essential component of the pyruvate dehydrogenase (PDH) and 2-oxoglutarate dehydrogenase (ODH) complexes. Catalyzes the reoxidation of dihydrolipoyl groups which are covalently attached to the lipoate acyltransferase components (E2) of the complexes. Also catalyzes a reversible NADH:NAD(+) transhydrogenation, and is able to transfer electrons from NADH to various redox-active compounds and quinones. May be involved in quinone redox cycling in C.glutamicum. In Corynebacterium glutamicum (strain ATCC 13032 / DSM 20300 / JCM 1318 / BCRC 11384 / CCUG 27702 / LMG 3730 / NBRC 12168 / NCIMB 10025 / NRRL B-2784 / 534), this protein is Dihydrolipoyl dehydrogenase (lpd).